The following is a 1038-amino-acid chain: Ribosome quality control complex subunit 2 (1038 aa).

Positions 350-383 (ALRIQNQESQAQKKIDDARAENDRKIQALLDVQE) form a coiled coil. Disordered regions lie at residues 459–499 (LNTS…MKRK), 708–824 (KTSG…DEPG), and 877–898 (QRKKEEIMKREVREDRKNKREK). The stretch at 713–768 (EDNGDDDEEEEEEEEEEEEEEEEEEEEEEEEKEEEEKEEEQQQDEDDSNEVNGLEK) forms a coiled coil. Acidic residues predominate over residues 714 to 761 (DNGDDDEEEEEEEEEEEEEEEEEEEEEEEEKEEEEKEEEQQQDEDDSN). Residues 780 to 794 (SFEHDNLEKDIEKHC) show a composition bias toward basic and acidic residues. Positions 795 to 805 (TISSDTDSDSG) are enriched in polar residues. Ser-797 carries the phosphoserine modification. Residues 830-912 (IENINSNVRG…QALKFTKKEK (83 aa)) are a coiled coil. Positions 877–894 (QRKKEEIMKREVREDRKN) are enriched in basic and acidic residues.

The protein belongs to the NEMF family. As to quaternary structure, component of the ribosome quality control complex (RQC), composed of the E3 ubiquitin ligase RKR1/LTN1, RQC1 and RQC2, as well as CDC48 and its ubiquitin-binding cofactors associated with the 60S ribosomal subunit. RQC2 binds to the 40S-binding surface of tRNAs.

Its subcellular location is the cytoplasm. Its function is as follows. Key component of the ribosome quality control complex (RQC), a ribosome-associated complex that mediates the extraction of incompletely synthesized nascent chains from stalled ribosomes as well as their ubiquitin-mediated proteasomal degradation. Thereby, frees 60S subunit ribosomes from the stalled translation complex and prevents the accumulation of nascent polypeptide chains that are potentially toxic for the cell. Within the RQC complex, RQC2 specifically binds stalled 60S ribosomal subunits by recognizing an exposed, nascent chain-conjugated tRNA moiety and promotes the recruitment of RKR1/LTN1 to stalled 60S subunits. Following binding to stalled 60S ribosomal subunits, RQC2 mediates CAT tailing by recruiting alanine- and threonine-charged tRNA to the A-site and directing the elongation of stalled nascent chains independently of mRNA or 40S subunits, leading to non-templated C-terminal Ala and Thr extensions (CAT tails). CAT tails promote the RKR1/LTN1-mediated ubiquitination of incompletely synthesized nascent polypeptides: CAT tailing facilitates RKR1/LTN1-dependent ubiquitination by exposing lysine residues that would otherwise remain buried in the ribosomal exit tunnel. Following ubiquitination, incompletely synthesized nascent polypeptides are recognized by CDC48 and degraded by the proteasome. CAT-tailed proteins tend to aggregate and sequester chaperones and can induce proteotoxic stress; their RKR1/LTN1-dependent ubiquitination and degradation is required to prevent proteotoxic stress. The polypeptide is Ribosome quality control complex subunit 2 (Saccharomyces cerevisiae (strain ATCC 204508 / S288c) (Baker's yeast)).